Reading from the N-terminus, the 46-residue chain is Transcriptional regulator SEHBP (46 aa).

In terms of assembly, interacts with histone H2B. Also interacts with chromatin-binding proteins HMGN1 and HMGN3.

It is found in the nucleus. Its subcellular location is the cytoplasm. In terms of biological role, plays a role in transcription regulation. This chain is Transcriptional regulator SEHBP, found in Homo sapiens (Human).